The primary structure comprises 142 residues: Maximins y/Hw (142 aa).

A signal peptide spans 1-18 (MIFKYIVAVSFLIASGYA). A propeptide spanning residues 19 to 43 (RSVKNDEQSLSQREVLEEESLREIR) is cleaved from the precursor. A Phenylalanine amide modification is found at phenylalanine 68. Residues 72 to 121 (TAEDHEVMKRLEAVIRDLDSLDHSEEASERETRGFNQEEIANLFTKKEKR) constitute a propeptide that is removed on maturation. Position 141 is an isoleucine amide (isoleucine 141).

This sequence belongs to the bombinin family. As to expression, expressed by the skin glands.

It localises to the secreted. Maximin-y shows antimicrobial activity against bacteria and against the fungus C.albicans. It has little hemolytic activity. Its function is as follows. Maximin-Hw shows antimicrobial activity against bacteria and against the fungus C.albicans. Shows strong hemolytic activity. In Bombina maxima (Giant fire-bellied toad), this protein is Maximins y/Hw.